A 211-amino-acid chain; its full sequence is MNSILLVFAGILAVCLPASATQCNVNPVQIPKDWITMHRSCRNSMRQQIQMEVGASLQYLAMGAHFSKDVVNRPGFAQLFFDAASEEREHAMKLIEYLLMRGELTNDVSSLLQVRPPTRSSWKGGVEALEHALSMESDVTKSIRNVIKACEDDSEFNDYHLVDYLTGDFLEEQYKGQRDLAGKASTLKKLMDRHEALGEFIFDKKLLGIDV.

The signal sequence occupies residues 1-20 (MNSILLVFAGILAVCLPASA). The 157-residue stretch at 35–191 (ITMHRSCRNS…GKASTLKKLM (157 aa)) folds into the Ferritin-like diiron domain. A disulfide bridge connects residues C41 and C150. Fe cation contacts are provided by E52, E87, H90, E136, and Q173.

It belongs to the ferritin family. In terms of assembly, oligomer of 12 light (L) chains and 12 heavy (H) chains; L and H chains are disulfide-linked. The functional molecule forms a roughly spherical shell with a diameter of 12 nm and contains a central cavity into which the insoluble ferric iron core is deposited.

The protein localises to the golgi apparatus. The protein resides in the secreted. The enzyme catalyses 4 Fe(2+) + O2 + 4 H(+) = 4 Fe(3+) + 2 H2O. Stores iron in a soluble, non-toxic, readily available form. Important for iron homeostasis. Iron is taken up in the ferrous form and deposited as ferric hydroxides after oxidation. Ferritin is composed of a heavy (H) chain which is responsible for the oxidation and uptake of ferrous iron, and a light (L) chain which facilitates the nucleation of the ferrihydrite iron core. The protein is Ferritin heavy chain of Trichoplusia ni (Cabbage looper).